Here is a 317-residue protein sequence, read N- to C-terminus: Melanocyte-stimulating hormone receptor (317 aa).

Topologically, residues 1–37 (MPVLGSQRRLLGSLNCTPPATLPLTLAPNRTGPQCLE) are extracellular. An N-linked (GlcNAc...) asparagine glycan is attached at Asn-29. Residues 38–63 (VSIPDGLFLSLGLVSLVENVLVVAAI) traverse the membrane as a helical segment. The Cytoplasmic portion of the chain corresponds to 64–72 (AKNRNLHSP). The chain crosses the membrane as a helical span at residues 73 to 93 (MYYFICCLAMSDLLVSVSNVL). Residues 94–118 (ETAVMLLLEAGVLATRAAVVQQLDN) lie on the Extracellular side of the membrane. A helical membrane pass occupies residues 119–140 (VIDVLICSSMVSSLCFLGAIAV). Over 141–163 (DRYISIFYALRYHSVVTLPRAWR) the chain is Cytoplasmic. The helical transmembrane segment at 164–183 (IIAAIWVASILTSVLSITYY) threads the bilayer. The Extracellular portion of the chain corresponds to 184 to 191 (NHTVVLLC). A helical membrane pass occupies residues 192–211 (LVGFFIAMLALMAVLYVHML). The Cytoplasmic portion of the chain corresponds to 212–240 (ARACQHARGIARLQKRQRPIHQGFGLKGA). The helical transmembrane segment at 241-266 (ATLTILLGVFFLCWGPFFLHLSLIVL) threads the bilayer. The Extracellular portion of the chain corresponds to 267–279 (CPQHPTCGCIFKN). Residues 280–300 (FNLFLALIICNAIVDPLIYAF) traverse the membrane as a helical segment. Residues 301-317 (RSQELRKTLQEVLQCSW) are Cytoplasmic-facing. The S-palmitoyl cysteine moiety is linked to residue Cys-315.

The protein belongs to the G-protein coupled receptor 1 family. In terms of assembly, interacts with MGRN1, but does not undergo MGRN1-mediated ubiquitination; this interaction competes with GNAS-binding and thus inhibits agonist-induced cAMP production. Interacts with OPN3; the interaction results in a decrease in MC1R-mediated cAMP signaling and ultimately a decrease in melanin production in melanocytes.

The protein localises to the cell membrane. Its function is as follows. Receptor for MSH (alpha, beta and gamma) and ACTH. The activity of this receptor is mediated by G proteins which activate adenylate cyclase. Mediates melanogenesis, the production of eumelanin (black/brown) and phaeomelanin (red/yellow), via regulation of cAMP signaling in melanocytes. The protein is Melanocyte-stimulating hormone receptor (MC1R) of Ovis aries (Sheep).